We begin with the raw amino-acid sequence, 1087 residues long: MIMSQKPFDLEGYRKYITEKVREAFNVAQEARAKGLDVSDHVEIPLASDMAERIEALIGIKGIAQEIRDLSSRMSREEVSLEMSRRIAAMFKDNRKEALDKAIRVGLAILTEGILVAPLEGIADVYIGKNQDGSEYVGISYAGPIRGAGGTAQALSVLIGDVVRRELGISRFQPTEDEIERYIEEIESYDRIKHLQYMPTPDEIKLVVRNSPICIDGEGSEEEEVSGHRDMERIKTNRIRGGMCLVLCEGLVQKARKILKYTSSMHLDDWNFLANLGGKAEGKSSKKSDKFLKDIVAGRPVFSHPSRPGGFRLRYGRSRVSGLAAASLNPATMYIMGKFIAIGSQIKVELPGKAAAVTPCDTIDGPTVLLKNGDHVKINDIEKAREVYDDVVEITDAGEILIAYGDFLENNYPLPTPSFTVEWWEQYLPDGVNAKDIDQFSAVEISRKYGIPLHPYYDYYWHDISFEDLEFLVKNAEQWSITEDGMRVPYPAFDVFIRLGIEFRRSGDYLIIRDYYPLLISLGYDVRNGKIVNVKKYERKGSVMETVNYLSGLIIKPRAPTRVGSRLGRPEKAGDRKMKPMVHSLFPVESYGEARRSIIGANKNSEGSYKAEVFFYRCNSCGFETPTPVCPRCGGHCSPLGEKTGSIDLESILNRAESILGISLDSLKEFKGVKKLMSKEKVAEPIEKGILRAVHDISVNKDGTCRFDMSDIPITHFRYREIGIDERTLADLGYEVRDVNELFPQDVIIPRKAAKYLFNVSRFIDDLLVKYYNMPPFYSLESEEDLIGHLIIGLAPHTSGGVVGRIIGFSDVNAFYAHPFFHAAKRRNCDGDEDSVMLLMDGFLNFSARYLPSTRGGLMDAPLVLSVLINPDEIDKEALNVDTLSRYPVLFYEAAERHASPAEIEDTMMTMKVRIKKTGTYMGSSYTMDTSDINSGVLVSSYKTLGTMDEKINEQLGLAKKLRAVDADDVAARVISTHFLPDMYGNFRKFFSQEFRCTKCNAKYRRIPLSGRCQKCGSTSLTLTIHKGSVVKYLNETLKIAENYRLPDYLKARIDNLARTIKETFPDTEEEEKPEPREVKITGLDMY.

The protein belongs to the archaeal DNA polymerase II family. Heterodimer of a large subunit and a small subunit.

It catalyses the reaction DNA(n) + a 2'-deoxyribonucleoside 5'-triphosphate = DNA(n+1) + diphosphate. It carries out the reaction Exonucleolytic cleavage in the 3'- to 5'-direction to yield nucleoside 5'-phosphates.. Possesses two activities: a DNA synthesis (polymerase) and an exonucleolytic activity that degrades single-stranded DNA in the 3'- to 5'-direction. Has a template-primer preference which is characteristic of a replicative DNA polymerase. The protein is DNA polymerase II large subunit (polC) of Thermoplasma acidophilum (strain ATCC 25905 / DSM 1728 / JCM 9062 / NBRC 15155 / AMRC-C165).